A 75-amino-acid chain; its full sequence is MKNTIKKGNQVLVLSGNSKGQIGEVLVIDRKRKQLVVKGINQKTKHMKPKRQGEVGQIIRREYPIHMSQVRLWNG.

The protein belongs to the universal ribosomal protein uL24 family. As to quaternary structure, part of the 50S ribosomal subunit.

The protein localises to the plastid. Its subcellular location is the chloroplast. One of two assembly initiator proteins, it binds directly to the 5'-end of the 23S rRNA, where it nucleates assembly of the 50S subunit. In Cyanidioschyzon merolae (strain NIES-3377 / 10D) (Unicellular red alga), this protein is Large ribosomal subunit protein uL24c (rpl24).